The sequence spans 316 residues: Beta-ketoacyl-[acyl-carrier-protein] synthase III (316 aa).

Active-site residues include Cys-112 and His-243. An ACP-binding region spans residues 244–248 (QANIR). Residue Asn-273 is part of the active site.

Belongs to the thiolase-like superfamily. FabH family. Homodimer.

It localises to the cytoplasm. It carries out the reaction malonyl-[ACP] + acetyl-CoA + H(+) = 3-oxobutanoyl-[ACP] + CO2 + CoA. It functions in the pathway lipid metabolism; fatty acid biosynthesis. Its function is as follows. Catalyzes the condensation reaction of fatty acid synthesis by the addition to an acyl acceptor of two carbons from malonyl-ACP. Catalyzes the first condensation reaction which initiates fatty acid synthesis and may therefore play a role in governing the total rate of fatty acid production. Possesses both acetoacetyl-ACP synthase and acetyl transacylase activities. Its substrate specificity determines the biosynthesis of branched-chain and/or straight-chain of fatty acids. The protein is Beta-ketoacyl-[acyl-carrier-protein] synthase III of Actinobacillus pleuropneumoniae serotype 5b (strain L20).